Consider the following 236-residue polypeptide: NLP effector protein 3 (236 aa).

Residues 1-19 form the signal peptide; that stretch reads MNLLGFLAVVALSTASVQA. The short motif at 103 to 113 is the Conserved undecapeptide motif I element; that stretch reads AIMYSWYFPKD. A Hepta-peptide GHRHDWE motif II motif is present at residues 120–126; it reads GHRHDWE.

The protein belongs to the Necrosis inducing protein (NPP1) family.

The protein localises to the secreted. Its function is as follows. Secreted effector that contributes to virulence during infection by P.capsici. Induces distinct chlorosis at 3 days after inoculation of host C.annuum leaves, and all the chlorotic areas gradually turn brown and become moderately necrotic at 7 days after inoculation. Leads only to chlorotic areas, without necrosis at 7 days after non-host N.benthamiana leaves infection. Induces cell death in hot pepper. This Phytophthora capsici protein is NLP effector protein 3.